Here is a 341-residue protein sequence, read N- to C-terminus: MALTSRFYNERYPEIEDVVMVNVLSIAEMGAYVHLLEYNNIEGMILLSELSRRRIRSINKLIRVGKTEPVVVIRVDKEKGYIDLSKRRVSPEDVEKCTERFAKAKAINSLLRHVADILGFEGNEKLEDLYQKTAWHFEKKYNNKTVAYDIFKQSVTDPTVFDECNLEPETKEVLLSNIKRKLVSPTVKIRADIECSCYGYEGIDAVKASLTKGLELSTEELPIRINLIAPPLYVMTTSTTKKTDGLKALEVAIEHIRAKTSEYDGEFKVIMAPKLVTAIDEADLARRLERAEAENAQVAGDDDEEDGADQEGMQFDPEKEFNHKGSGAGRANEEDEEEEED.

One can recognise an S1 motif domain in the interval E16–R87. S51 bears the Phosphoserine mark. A disordered region spans residues A293–D341. A compositionally biased stretch (acidic residues) spans G300–D309.

It belongs to the eIF-2-alpha family. Eukaryotic translation initiation factor 2 eIF2 is a heterotrimeric complex composed of an alpha, a beta and a gamma subunit. Post-translationally, phosphorylation of eIF-2-alpha impairs the recycling of eIF-2 between successive rounds of initiation and thus leads to inhibition of translation.

It is found in the cytoplasm. It localises to the cytosol. Its function is as follows. eIF-2 functions in the early steps of protein synthesis by forming a ternary complex with GTP and initiator tRNA. This pre-initiation complex mediates ribosomal recognition of a start codon during the scanning process of the leader region. The polypeptide is Eukaryotic translation initiation factor 2 subunit 1 (Drosophila melanogaster (Fruit fly)).